A 936-amino-acid polypeptide reads, in one-letter code: Phosphoenolpyruvate carboxylase (936 aa).

Positions 1 to 20 (MSSLNLSAGPEPVSERPDDA) are disordered. Catalysis depends on residues His-164 and Lys-598.

Belongs to the PEPCase type 1 family. Requires Mg(2+) as cofactor.

It catalyses the reaction oxaloacetate + phosphate = phosphoenolpyruvate + hydrogencarbonate. Its function is as follows. Forms oxaloacetate, a four-carbon dicarboxylic acid source for the tricarboxylic acid cycle. This Rhodopseudomonas palustris (strain ATCC BAA-98 / CGA009) protein is Phosphoenolpyruvate carboxylase (ppc).